Consider the following 100-residue polypeptide: NADH-quinone oxidoreductase subunit K (100 aa).

3 helical membrane-spanning segments follow: residues methionine 1–glycine 21, isoleucine 28–alanine 48, and phenylalanine 64–phenylalanine 84.

It belongs to the complex I subunit 4L family. In terms of assembly, NDH-1 is composed of 14 different subunits. Subunits NuoA, H, J, K, L, M, N constitute the membrane sector of the complex.

Its subcellular location is the cell inner membrane. It carries out the reaction a quinone + NADH + 5 H(+)(in) = a quinol + NAD(+) + 4 H(+)(out). Functionally, NDH-1 shuttles electrons from NADH, via FMN and iron-sulfur (Fe-S) centers, to quinones in the respiratory chain. The immediate electron acceptor for the enzyme in this species is believed to be ubiquinone. Couples the redox reaction to proton translocation (for every two electrons transferred, four hydrogen ions are translocated across the cytoplasmic membrane), and thus conserves the redox energy in a proton gradient. This Helicobacter pylori (strain ATCC 700392 / 26695) (Campylobacter pylori) protein is NADH-quinone oxidoreductase subunit K.